The following is a 317-amino-acid chain: 17-beta-hydroxysteroid dehydrogenase type 6 (317 aa).

Positions 1–17 are cleaved as a signal peptide; that stretch reads MWFYLVTLVGLYYLLRW. 33–57 contributes to the NAD(+) binding site; the sequence is FITGCDSGFGNLLARQLDRRGMRVL. An N-linked (GlcNAc...) asparagine glycan is attached at Asn-161. Substrate is bound at residue Ser-164. Tyr-176 functions as the Proton acceptor in the catalytic mechanism.

It belongs to the short-chain dehydrogenases/reductases (SDR) family. As to expression, detected in prostate, liver and kidney.

The protein localises to the microsome membrane. The protein resides in the endoplasmic reticulum membrane. The enzyme catalyses all-trans-retinol--[retinol-binding protein] + NAD(+) = all-trans-retinal--[retinol-binding protein] + NADH + H(+). It catalyses the reaction all-trans-retinol + NAD(+) = all-trans-retinal + NADH + H(+). The catalysed reaction is androsterone + NAD(+) = 5alpha-androstan-3,17-dione + NADH + H(+). It carries out the reaction testosterone + NAD(+) = androst-4-ene-3,17-dione + NADH + H(+). The enzyme catalyses 5alpha-androstane-3alpha,17beta-diol + NAD(+) = 17beta-hydroxy-5alpha-androstan-3-one + NADH + H(+). It catalyses the reaction 17beta-estradiol + NAD(+) = estrone + NADH + H(+). The catalysed reaction is 17beta-estradiol + NADP(+) = estrone + NADPH + H(+). It carries out the reaction 3alpha-hydroxy-5alpha-pregnan-20-one + NAD(+) = 5alpha-pregnane-3,20-dione + NADH + H(+). The enzyme catalyses 5alpha-androstane-3beta,17beta-diol + NAD(+) = 17beta-hydroxy-5alpha-androstan-3-one + NADH + H(+). It catalyses the reaction 3beta-hydroxy-5alpha-androstan-17-one + NAD(+) = 5alpha-androstan-3,17-dione + NADH + H(+). Competitively inhibited by 9-cis-retinoic acid and 13-cis-retinoic acid. Its function is as follows. NAD-dependent oxidoreductase with broad substrate specificity that shows both oxidative and reductive activity (in vitro). Has retinol dehydrogenase activity towards all-trans-retinol (in vitro). Has 17-beta-hydroxysteroid dehydrogenase activity towards various steroids (in vitro). Converts 5-alpha-androstan-3-alpha,17-beta-diol to androsterone and estradiol to estrone (in vitro). Has 3-alpha-hydroxysteroid dehydrogenase activity towards androsterone (in vitro). The polypeptide is 17-beta-hydroxysteroid dehydrogenase type 6 (Hsd17b6) (Rattus norvegicus (Rat)).